A 1131-amino-acid chain; its full sequence is DNA polymerase II large subunit (1131 aa).

The protein belongs to the archaeal DNA polymerase II family. In terms of assembly, heterodimer of a large subunit and a small subunit.

The enzyme catalyses DNA(n) + a 2'-deoxyribonucleoside 5'-triphosphate = DNA(n+1) + diphosphate. The catalysed reaction is Exonucleolytic cleavage in the 3'- to 5'-direction to yield nucleoside 5'-phosphates.. In terms of biological role, possesses two activities: a DNA synthesis (polymerase) and an exonucleolytic activity that degrades single-stranded DNA in the 3'- to 5'-direction. Has a template-primer preference which is characteristic of a replicative DNA polymerase. The protein is DNA polymerase II large subunit of Methanococcus maripaludis (strain DSM 14266 / JCM 13030 / NBRC 101832 / S2 / LL).